Consider the following 416-residue polypeptide: Glyceraldehyde-3-phosphate dehydrogenase, chloroplastic (416 aa).

The transit peptide at 1 to 78 (MAFVAPVSSV…APARTSNAPS (78 aa)) directs the protein to the chloroplast. NADP(+) contacts are provided by residues 90–91 (RI), aspartate 114, and arginine 158. Residues 232 to 234 (SCT), threonine 263, arginine 278, 291 to 292 (TG), and arginine 314 each bind D-glyceraldehyde 3-phosphate. Residue cysteine 233 is the Nucleophile of the active site. Asparagine 396 is an NADP(+) binding site.

The protein belongs to the glyceraldehyde-3-phosphate dehydrogenase family. Homotetramer.

It is found in the plastid. It localises to the chloroplast. The catalysed reaction is D-glyceraldehyde 3-phosphate + phosphate + NADP(+) = (2R)-3-phospho-glyceroyl phosphate + NADPH + H(+). It participates in carbohydrate biosynthesis; Calvin cycle. The protein is Glyceraldehyde-3-phosphate dehydrogenase, chloroplastic (GAPA) of Gracilaria gracilis (Red alga).